A 174-amino-acid chain; its full sequence is Co-chaperone protein HscB homolog (174 aa).

Residues 2–74 (NYFNLFNFTP…LRRAEHLLSL (73 aa)) form the J domain.

The protein belongs to the HscB family. In terms of assembly, interacts with HscA and stimulates its ATPase activity.

Co-chaperone involved in the maturation of iron-sulfur cluster-containing proteins. Seems to help targeting proteins to be folded toward HscA. This is Co-chaperone protein HscB homolog from Shewanella denitrificans (strain OS217 / ATCC BAA-1090 / DSM 15013).